The following is a 74-amino-acid chain: MLGLAIMAISFIFMSYSPKPELIFDANHMAVGVKDRENKLVIHADKIPAFNRTYWANWFGQKDSMVLPLENNIF.

This is an uncharacterized protein from Rickettsia conorii (strain ATCC VR-613 / Malish 7).